Reading from the N-terminus, the 1236-residue chain is ABC transporter B family member 9 (1236 aa).

One can recognise an ABC transmembrane type-1 1 domain in the interval 33 to 320 (MTVGTIAAAG…TSPSLNAFAA (288 aa)). 6 consecutive transmembrane segments (helical) span residues 38 to 58 (IAAA…GQLI), 80 to 100 (FIYL…CWMV), 158 to 178 (QLLC…PLLA), 179 to 199 (GVLC…SLIM), 257 to 277 (ISGF…GLAV), and 288 to 308 (GYNG…GMSL). The ABC transporter 1 domain maps to 355–591 (IELKDVYFRY…PEGAYSQLVR (237 aa)). Residue 390–397 (GQSGSGKS) participates in ATP binding. Residue Asn542 is glycosylated (N-linked (GlcNAc...) asparagine). Residues 593–616 (QEGSKEEATESERPETSLDVERSG) form a disordered region. The span at 594–616 (EGSKEEATESERPETSLDVERSG) shows a compositional bias: basic and acidic residues. N-linked (GlcNAc...) asparagine glycosylation is found at Asn631 and Asn653. 6 helical membrane-spanning segments follow: residues 685 to 705 (VLVL…IFGL), 725 to 745 (SHFW…MIPV), 785 to 805 (SLVG…TTGL), 806 to 826 (IIAF…SPFI), 902 to 922 (FSFF…AGLI), and 927 to 947 (ATFG…IGVS). One can recognise an ABC transmembrane type-1 2 domain in the interval 686 to 958 (LVLGSIAAMV…TSAMAPDSNK (273 aa)). The region spanning 993-1230 (IEFRHVSFRY…SGGAYASLVT (238 aa)) is the ABC transporter 2 domain. Residue 1028–1035 (GESGSGKS) coordinates ATP. N-linked (GlcNAc...) asparagine glycosylation is found at Asn1082 and Asn1181.

It belongs to the ABC transporter superfamily. ABCB family. Multidrug resistance exporter (TC 3.A.1.201) subfamily.

It localises to the membrane. The chain is ABC transporter B family member 9 (ABCB9) from Arabidopsis thaliana (Mouse-ear cress).